The primary structure comprises 252 residues: Chitooligosaccharide deacetylase (252 aa).

Mg(2+) contacts are provided by His61 and His125.

It belongs to the YdjC deacetylase family. ChbG subfamily. In terms of assembly, homodimer. The cofactor is Mg(2+).

Its subcellular location is the cytoplasm. The enzyme catalyses N,N'-diacetylchitobiose + H2O = N-acetyl-beta-D-glucosaminyl-(1-&gt;4)-D-glucosamine + acetate. It carries out the reaction diacetylchitobiose-6'-phosphate + H2O = N'-monoacetylchitobiose-6'-phosphate + acetate. It functions in the pathway glycan degradation; chitin degradation. In terms of biological role, involved in the degradation of chitin. ChbG is essential for growth on the acetylated chitooligosaccharides chitobiose and chitotriose but is dispensable for growth on cellobiose and chitosan dimer, the deacetylated form of chitobiose. Deacetylation of chitobiose-6-P and chitotriose-6-P is necessary for both the activation of the chb promoter by the regulatory protein ChbR and the hydrolysis of phosphorylated beta-glucosides by the phospho-beta-glucosidase ChbF. Catalyzes the removal of only one acetyl group from chitobiose-6-P to yield monoacetylchitobiose-6-P, the inducer of ChbR and the substrate of ChbF. This is Chitooligosaccharide deacetylase from Escherichia coli O139:H28 (strain E24377A / ETEC).